The following is a 765-amino-acid chain: ATP-dependent RNA helicase DBP4 (765 aa).

The Q motif signature appears at 48-76 (SQFSDLPITENTLKGLKEATFVSLTDIQK). The Helicase ATP-binding domain maps to 79–253 (IPIALKGEDL…RLSLTNPNKI (175 aa)). ATP is bound at residue 92 to 99 (ARTGSGKT). A DEAD box motif is present at residues 201–204 (DEAD). The Helicase C-terminal domain maps to 267–439 (SLEQYYVKVP…SIRPQLQSLC (173 aa)). 2 stretches are compositionally biased toward basic and acidic residues: residues 655–668 (KISDITDKEVERQK) and 720–738 (PVSKKPKWFEGGDDDKSKN). The segment at 655–765 (KISDITDKEV…ESLTARLIGN (111 aa)) is disordered. Residues 744-756 (VEYDEPETLEDLE) show a composition bias toward acidic residues.

The protein belongs to the DEAD box helicase family. DDX10/DBP4 subfamily. In terms of assembly, interacts with the U3 and U14 snoRNAs. Associates with pre-ribosomal complexes.

The protein resides in the nucleus. Its subcellular location is the nucleolus. The catalysed reaction is ATP + H2O = ADP + phosphate + H(+). Its function is as follows. ATP-dependent RNA helicase required for ribosome biogenesis. Involved in the release of U14 snoRNA in pre-ribosomal complexes. Required for pre-rRNA cleavage at site A2. The protein is ATP-dependent RNA helicase DBP4 (DBP4) of Candida albicans (strain SC5314 / ATCC MYA-2876) (Yeast).